The primary structure comprises 293 residues: tRNA pseudouridine synthase B (293 aa).

Aspartate 38 functions as the Nucleophile in the catalytic mechanism.

The protein belongs to the pseudouridine synthase TruB family. Type 1 subfamily.

It carries out the reaction uridine(55) in tRNA = pseudouridine(55) in tRNA. Functionally, responsible for synthesis of pseudouridine from uracil-55 in the psi GC loop of transfer RNAs. The sequence is that of tRNA pseudouridine synthase B from Microcystis aeruginosa (strain NIES-843 / IAM M-2473).